The following is a 211-amino-acid chain: Small ribosomal subunit protein uS4 (211 aa).

Residues 98-161 (RRLDNVVYRL…RDIPFIKENL (64 aa)) form the S4 RNA-binding domain.

It belongs to the universal ribosomal protein uS4 family. In terms of assembly, part of the 30S ribosomal subunit. Contacts protein S5. The interaction surface between S4 and S5 is involved in control of translational fidelity.

Its function is as follows. One of the primary rRNA binding proteins, it binds directly to 16S rRNA where it nucleates assembly of the body of the 30S subunit. In terms of biological role, with S5 and S12 plays an important role in translational accuracy. This is Small ribosomal subunit protein uS4 from Aquifex aeolicus (strain VF5).